A 503-amino-acid chain; its full sequence is Lanosterol 14-alpha demethylase (503 aa).

The helical transmembrane segment at Gly-24–Phe-44 threads the bilayer. Cys-449 is a binding site for heme.

It belongs to the cytochrome P450 family. Requires heme as cofactor. Ubiquitinated by MARCHF6, leading to proteasomal degradation.

The protein localises to the endoplasmic reticulum membrane. Its subcellular location is the microsome membrane. The enzyme catalyses a 14alpha-methyl steroid + 3 reduced [NADPH--hemoprotein reductase] + 3 O2 = a Delta(14) steroid + formate + 3 oxidized [NADPH--hemoprotein reductase] + 4 H2O + 4 H(+). It catalyses the reaction lanosterol + 3 reduced [NADPH--hemoprotein reductase] + 3 O2 = 4,4-dimethyl-5alpha-cholesta-8,14,24-trien-3beta-ol + formate + 3 oxidized [NADPH--hemoprotein reductase] + 4 H2O + 4 H(+). It carries out the reaction 24,25-dihydrolanosterol + 3 reduced [NADPH--hemoprotein reductase] + 3 O2 = 4,4-dimethyl-8,14-cholestadien-3beta-ol + formate + 3 oxidized [NADPH--hemoprotein reductase] + 4 H2O + 4 H(+). The catalysed reaction is a 14alpha-methyl steroid + reduced [NADPH--hemoprotein reductase] + O2 = a 14alpha-hydroxymethyl steroid + oxidized [NADPH--hemoprotein reductase] + H2O + H(+). The enzyme catalyses a 14alpha-hydroxymethyl steroid + reduced [NADPH--hemoprotein reductase] + O2 = a 14alpha-formyl steroid + oxidized [NADPH--hemoprotein reductase] + 2 H2O + H(+). It catalyses the reaction a 14alpha-formyl steroid + reduced [NADPH--hemoprotein reductase] + O2 = a Delta(14) steroid + formate + oxidized [NADPH--hemoprotein reductase] + H2O + 2 H(+). It carries out the reaction lanosterol + reduced [NADPH--hemoprotein reductase] + O2 = 32-hydroxylanosterol + oxidized [NADPH--hemoprotein reductase] + H2O + H(+). The catalysed reaction is 32-hydroxylanosterol + reduced [NADPH--hemoprotein reductase] + O2 = 32-oxolanosterol + oxidized [NADPH--hemoprotein reductase] + 2 H2O + H(+). The enzyme catalyses 32-oxolanosterol + reduced [NADPH--hemoprotein reductase] + O2 = 4,4-dimethyl-5alpha-cholesta-8,14,24-trien-3beta-ol + formate + oxidized [NADPH--hemoprotein reductase] + H2O + 2 H(+). It catalyses the reaction 24,25-dihydrolanosterol + reduced [NADPH--hemoprotein reductase] + O2 = 32-hydroxy-24,25-dihydrolanosterol + oxidized [NADPH--hemoprotein reductase] + H2O + H(+). It carries out the reaction 32-hydroxy-24,25-dihydrolanosterol + reduced [NADPH--hemoprotein reductase] + O2 = 32-oxo-24,25-dihydrolanosterol + oxidized [NADPH--hemoprotein reductase] + 2 H2O + H(+). The catalysed reaction is 32-oxo-24,25-dihydrolanosterol + reduced [NADPH--hemoprotein reductase] + O2 = 4,4-dimethyl-8,14-cholestadien-3beta-ol + formate + oxidized [NADPH--hemoprotein reductase] + H2O + 2 H(+). Its pathway is steroid biosynthesis; zymosterol biosynthesis; zymosterol from lanosterol: step 1/6. Its activity is regulated as follows. Inhibited by azalanstat. Inhibited by azole antifungal agents ketoconazole, itraconazole and fluconazole. Functionally, sterol 14alpha-demethylase that plays a critical role in the cholesterol biosynthesis pathway, being cholesterol the major sterol component in mammalian membranes as well as a precursor for bile acid and steroid hormone synthesis. Cytochrome P450 monooxygenase that catalyzes the three-step oxidative removal of the 14alpha-methyl group (C-32) of sterols such as lanosterol (lanosta-8,24-dien-3beta-ol) and 24,25-dihydrolanosterol (DHL) in the form of formate, and converts the sterols to 4,4-dimethyl-5alpha-cholesta-8,14,24-trien-3beta-ol and 4,4-dimethyl-8,14-cholestadien-3beta-ol, respectively, which are intermediates of cholesterol biosynthesis. Can also demethylate substrates not intrinsic to mammals, such as eburicol (24-methylene-24,25-dihydrolanosterol), but at a lower rate than DHL. The polypeptide is Lanosterol 14-alpha demethylase (Rattus norvegicus (Rat)).